A 119-amino-acid chain; its full sequence is Large ribosomal subunit protein uL22c (119 aa).

This sequence belongs to the universal ribosomal protein uL22 family. Part of the 50S ribosomal subunit.

The protein localises to the plastid. It is found in the chloroplast. In terms of biological role, this protein binds specifically to 23S rRNA. Functionally, the globular domain of the protein is located near the polypeptide exit tunnel on the outside of the subunit, while an extended beta-hairpin is found that lines the wall of the exit tunnel in the center of the 70S ribosome. In Spirogyra maxima (Green alga), this protein is Large ribosomal subunit protein uL22c (rpl22).